A 239-amino-acid chain; its full sequence is MNIEEFTSGLAEKGISLSPRQLEQFELYYDMLVEWNEKINLTSITEKKEVYLKHFYDSITAAFYVDFNQVNTICDVGAGAGFPSLPIKICFPHLHVTIVDSLNKRITFLEKLSEALQLENTTFCHDRAETFGQRKDVRESYDIVTARAVARLSVLSELCLPLVKKNGLFVALKAASAEEELNAGKKAITTLGGELENIHSFKLPIEESDRNIMVIRKIKNTPKKYPRKPGTPNKSPIEG.

Residues G77, F82, A128–E129, and R147 each bind S-adenosyl-L-methionine. The disordered stretch occupies residues K219–G239.

It belongs to the methyltransferase superfamily. RNA methyltransferase RsmG family.

The protein resides in the cytoplasm. Its function is as follows. Specifically methylates the N7 position of guanine in position 535 of 16S rRNA. This chain is Ribosomal RNA small subunit methyltransferase G, found in Bacillus subtilis (strain 168).